Reading from the N-terminus, the 271-residue chain is Mannosyl-3-phosphoglycerate phosphatase (271 aa).

Aspartate 13 acts as the Nucleophile in catalysis. Mg(2+)-binding residues include aspartate 13, aspartate 15, and aspartate 214.

Belongs to the HAD-like hydrolase superfamily. MPGP family. It depends on Mg(2+) as a cofactor.

It is found in the cytoplasm. It catalyses the reaction 2-O-(alpha-D-mannosyl)-3-phosphoglycerate + H2O = (2R)-2-O-(alpha-D-mannosyl)-glycerate + phosphate. In Salmonella choleraesuis (strain SC-B67), this protein is Mannosyl-3-phosphoglycerate phosphatase (yedP).